The sequence spans 286 residues: Aquaporin PIP1-3 (286 aa).

Met-1 carries the N-acetylmethionine modification. Residues 1–33 form a disordered region; it reads MEGKEEDVRVGANKFPERQPIGTSAQTDKDYKE. Topologically, residues 1–54 are cytoplasmic; sequence MEGKEEDVRVGANKFPERQPIGTSAQTDKDYKEPPPAPFFEPGELSSWSFYRAG. Residues 55-75 traverse the membrane as a helical segment; that stretch reads IAEFIATFLFLYITVLTVMGV. Topologically, residues 76-81 are extracellular; sequence KRAPNM. The helical transmembrane segment at 82–102 threads the bilayer; it reads CASVGIQGIAWAFGGMIFALV. The Cytoplasmic portion of the chain corresponds to 103-132; that stretch reads YCTAGISGGHINPAVTFGLFLARKLSLTRA. The NPA 1 signature appears at 114–116; sequence NPA. The helical transmembrane segment at 133 to 153 threads the bilayer; the sequence is VFYIVMQCLGAICGAGVVKGF. At 154 to 174 the chain is on the extracellular side; that stretch reads QPNPYQTLGGGANTVAHGYTK. The helical transmembrane segment at 175 to 195 threads the bilayer; sequence GSGLGAEIIGTFVLVYTVFSA. Residues 196–208 lie on the Cytoplasmic side of the membrane; that stretch reads TDAKRSARDSHVP. Residues 209–229 form a helical membrane-spanning segment; that stretch reads ILAPLPIGFAVFLVHLATIPI. At 230-256 the chain is on the extracellular side; it reads TGTGINPARSLGAAIIYNKDHAWDDHW. An NPA 2 motif is present at residues 235–237; it reads NPA. A helical membrane pass occupies residues 257-277; sequence IFWVGPFIGAALAALYHQLVI. Topologically, residues 278–286 are cytoplasmic; it reads RAIPFKSRS. The residue at position 284 (Ser-284) is a Phosphoserine.

The protein belongs to the MIP/aquaporin (TC 1.A.8) family. PIP (TC 1.A.8.11) subfamily. As to expression, expressed in roots, above ground, ripening fruit, flower buds, green siliques and senescing leaves.

It localises to the cell membrane. Water channel required to facilitate the transport of water across cell membrane. Its function is impaired by Hg(2+). This is Aquaporin PIP1-3 (PIP1-3) from Arabidopsis thaliana (Mouse-ear cress).